We begin with the raw amino-acid sequence, 816 residues long: MGDTVVEPTPLKPTSESTPGPAGSNGGSLLSVITEGVGELSVIDPEVAQKACQEVLEKVKLLHGGVAISSRNSPLELVNGDGVDNEIRCLDDPPSRIREEEDEMGATVAVGTAKGARRQRQNNSAKQSWLLRLFESKLFDISMAMSYLYNSKEPGVQAYIGNRLFCFRNEDVDFYLPQLLNMYIHMDEDVGDAIKPYIVHRCRQSINFSLQCALLLGAYSSDMHISTQRHSRGTKLRKLILSDELKPAHRKRELPSLSPAPDTGLSPSKRTHQRSKSDATASISLSSNLKRTASNPKVENEDEELSSSTESIDNSFSSPVRLAPEREFIKSLMAIGKRLATLPTKEQKTQRLISELSLLNHKLPARVWLPTAGFDHHVVRVPHTQAVVLNSKDKAPYLIYVEVLECENFDTTSVPARIPENRIRSTRSVENLPECGITHEQRAGSFSTVPNYDNDDEAWSVDDIGELQVELPEVHTNSCDNISQFSVDSITSQESKEPVFIAAGDIRRRLSEQLAHTPTAFKRDPEDPSAVALKEPWQEKVRRIREGSPYGHLPNWRLLSVIVKCGDDLRQELLAFQVLKQLQSIWEQERVPLWIKPYKILVISADSGMIEPVVNAVSIHQVKKQSQLSLLDYFLQEHGSYTTEAFLSAQRNFVQSCAGYCLVCYLLQVKDRHNGNILLDAEGHIIHIDFGFILSSSPRNLGFETSAFKLTTEFVDVMGGLDGDMFNYYKMLMLQGLIAARKHMDKVVQIVEIMQQGSQLPCFHGSSTIRNLKERFHMSMTEEQLQLLVEQMVDGSMRSITTKLYDGFQYLTNGIM.

The interval 1 to 30 (MGDTVVEPTPLKPTSESTPGPAGSNGGSLL) is disordered. Glycine 2 bears the N-acetylglycine mark. The interaction with ACBD3 stretch occupies residues 2–68 (GDTVVEPTPL…VKLLHGGVAI (67 aa)). Residues 52–242 (CQEVLEKVKL…GTKLRKLILS (191 aa)) form the PIK helical domain. A disordered region spans residues 248 to 318 (AHRKRELPSL…TESIDNSFSS (71 aa)). Residue serine 258 is modified to Phosphoserine. Position 263 is a phosphothreonine (threonine 263). 5 positions are modified to phosphoserine: serine 266, serine 275, serine 277, serine 284, and serine 294. Composition is skewed to polar residues over residues 278-297 (DATASISLSSNLKRTASNPK) and 306-318 (SSSTESIDNSFSS). Residue serine 428 is modified to Phosphoserine. Phosphothreonine is present on threonine 438. Serine 511 bears the Phosphoserine mark. Phosphothreonine occurs at positions 517 and 519. A PI3K/PI4K catalytic domain is found at 535–801 (EPWQEKVRRI…MVDGSMRSIT (267 aa)). The interval 541 to 547 (VRRIREG) is G-loop. The segment at 668–676 (QVKDRHNGN) is catalytic loop. Residues 687 to 711 (HIDFGFILSSSPRNLGFETSAFKLT) form an activation loop region.

This sequence belongs to the PI3/PI4-kinase family. Type III PI4K subfamily. In terms of assembly, interacts with ARF1 and ARF3 in the Golgi complex, but not with ARF4, ARF5 or ARF6. Interacts with NCS1/FREQ in a calcium-independent manner. Interacts with CALN1/CABP8 and CALN2/CABP7; in a calcium-dependent manner; this interaction competes with NCS1/FREQ binding. Interacts with ACBD3. Interacts with ARMH3, YWHAB, YWHAE, YWHAG, YWHAH, YWHAQ, YWHAZ and SFN. Interacts with GGA2 (via VHS domain); the interaction is important for PI4KB location at the Golgi apparatus membrane. Interacts with ATG9A. Requires Mg(2+) as cofactor. The cofactor is Mn(2+).

It localises to the endomembrane system. The protein resides in the mitochondrion outer membrane. It is found in the rough endoplasmic reticulum membrane. Its subcellular location is the golgi apparatus. The protein localises to the golgi apparatus membrane. It carries out the reaction a 1,2-diacyl-sn-glycero-3-phospho-(1D-myo-inositol) + ATP = a 1,2-diacyl-sn-glycero-3-phospho-(1D-myo-inositol 4-phosphate) + ADP + H(+). Its activity is regulated as follows. Inhibited by wortmannin. Increased kinase activity upon interaction with NCS1/FREQ. Functionally, phosphorylates phosphatidylinositol (PI) in the first committed step in the production of the second messenger inositol-1,4,5,-trisphosphate (PIP). May regulate Golgi disintegration/reorganization during mitosis, possibly via its phosphorylation. Involved in Golgi-to-plasma membrane trafficking. May play an important role in the inner ear development. In Otolemur garnettii (Small-eared galago), this protein is Phosphatidylinositol 4-kinase beta (PI4KB).